Consider the following 209-residue polypeptide: Cytochrome bo(3) ubiquinol oxidase subunit 3 (209 aa).

The Cytoplasmic portion of the chain corresponds to 1 to 29 (MSTAVLNKHLADAHEVGHDHDHAHDSGGN). A helical transmembrane segment spans residues 30–50 (TVFGFWLYLMTDCVLFASVFA). Residues 51–72 (TYAVLVHHTAGGPSGKDIFELP) lie on the Periplasmic side of the membrane. Residues 73-93 (YVLVETAILLVSSCTYGLAML) form a helical membrane-spanning segment. At 94–102 (SAHKGAKGQ) the chain is on the cytoplasmic side. The helical transmembrane segment at 103 to 123 (AIAWLGVTFLLGAAFIGMEIN) threads the bilayer. Residues 124 to 143 (EFHHLIAEGFGPSRSAFLSS) are Periplasmic-facing. The helical transmembrane segment at 144 to 164 (FFTLVGMHGLHVSAGLLWMLV) threads the bilayer. Over 165–186 (LMAQIWTRGLTAQNNTRMMCLS) the chain is Cytoplasmic. The helical transmembrane segment at 187-207 (LFWHFLDIVWICVFTVVYLMG) threads the bilayer. Topologically, residues 208 to 209 (AL) are periplasmic.

Belongs to the cytochrome c oxidase subunit 3 family. As to quaternary structure, heterooctamer of two A chains, two B chains, two C chains and two D chains.

The protein resides in the cell inner membrane. In terms of biological role, cytochrome bo(3) ubiquinol terminal oxidase is the component of the aerobic respiratory chain of E.coli that predominates when cells are grown at high aeration. Has proton pump activity across the membrane in addition to electron transfer, pumping 2 protons/electron. This chain is Cytochrome bo(3) ubiquinol oxidase subunit 3 (cyoC), found in Pseudomonas aeruginosa (strain ATCC 15692 / DSM 22644 / CIP 104116 / JCM 14847 / LMG 12228 / 1C / PRS 101 / PAO1).